The following is a 500-amino-acid chain: Probable cardiolipin synthase YwiE (500 aa).

3 helical membrane-spanning segments follow: residues 6–26, 31–51, and 59–79; these read LEFF…FFPV, FYGG…SLIL, and TLLW…FYLF. 2 PLD phosphodiesterase domains span residues 237 to 264 and 413 to 440; these read LNFR…GKEY and QKGF…DMRS. Active-site residues include His-242, Lys-244, Asp-249, His-418, Lys-420, and Asp-425.

The protein belongs to the phospholipase D family. Cardiolipin synthase subfamily.

The protein resides in the cell membrane. It carries out the reaction 2 a 1,2-diacyl-sn-glycero-3-phospho-(1'-sn-glycerol) = a cardiolipin + glycerol. Functionally, catalyzes the reversible phosphatidyl group transfer from one phosphatidylglycerol molecule to another to form cardiolipin (CL) (diphosphatidylglycerol) and glycerol. May have a role in the heat shock response since the level of the transcript of ywiE increases after a heat shock. In Bacillus subtilis (strain 168), this protein is Probable cardiolipin synthase YwiE (ywiE).